The sequence spans 261 residues: MENKSREDINLSPVSKIEIYSFFDPFSSDCFKLSAILSKLRIEYNQYIRIRHILNPSLKVLTKCQAQSTSNFDNIALAYKAAELQGRVRAERFIHLMQNEIIPKRDIITESMICDCIQNAGIDLEVFKDDLQKSKLTESLKIDLHIAREMEIEQAPSLVFFSEDVHEEGLKVEGLYPYHIYTYIINELMGKPIEKNLPPKLETYIQQQQLVTMEELLTIYEWPEKLLNKELKKLAIQQKIEKLKYPDGDFWKSKMPKIKSK.

This sequence belongs to the SpxH family. In terms of assembly, interacts with Spx.

It localises to the cytoplasm. Functionally, adapter protein required for efficient degradation of Spx by ClpXP under non-stress conditions. Interaction with Spx stabilizes Spx and exposes the C-terminus of Spx for recognition and proteolysis by ClpXP. This is ClpXP adapter protein SpxH from Staphylococcus aureus.